The sequence spans 142 residues: Mitochondrial import inner membrane translocase subunit TIM22-4 (142 aa).

4 consecutive transmembrane segments (helical) span residues 21 to 41 (VTSG…LGAL), 70 to 88 (SCKT…ECIV), 97 to 113 (TVNT…SMSA), and 120 to 137 (ACIG…IEKF).

The protein belongs to the Tim17/Tim22/Tim23 family.

Its subcellular location is the mitochondrion inner membrane. Its function is as follows. Essential core component of the TIM22 complex, a complex that mediates the import and insertion of multi-pass transmembrane proteins into the mitochondrial inner membrane. This chain is Mitochondrial import inner membrane translocase subunit TIM22-4 (TIM22-4), found in Arabidopsis thaliana (Mouse-ear cress).